Here is a 207-residue protein sequence, read N- to C-terminus: Small ribosomal subunit protein uS4 (207 aa).

The interval 31–56 is disordered; it reads KCKLDSKPGQHGRTSGARTSDYGNQL. The span at 42 to 53 shows a compositional bias: polar residues; the sequence is GRTSGARTSDYG. The S4 RNA-binding domain occupies 97-157; that stretch reads ARLDNVVYRM…EKSKKQVRIV (61 aa).

This sequence belongs to the universal ribosomal protein uS4 family. Part of the 30S ribosomal subunit. Contacts protein S5. The interaction surface between S4 and S5 is involved in control of translational fidelity.

Its function is as follows. One of the primary rRNA binding proteins, it binds directly to 16S rRNA where it nucleates assembly of the body of the 30S subunit. With S5 and S12 plays an important role in translational accuracy. The sequence is that of Small ribosomal subunit protein uS4 from Janthinobacterium sp. (strain Marseille) (Minibacterium massiliensis).